The sequence spans 152 residues: Large ribosomal subunit protein bL9 (152 aa).

The tract at residues 41-61 (QSAMSQLNAERKAEQRREAEE) is disordered. Over residues 49 to 61 (AERKAEQRREAEE) the composition is skewed to basic and acidic residues.

It belongs to the bacterial ribosomal protein bL9 family.

In terms of biological role, binds to the 23S rRNA. This is Large ribosomal subunit protein bL9 from Levilactobacillus brevis (strain ATCC 367 / BCRC 12310 / CIP 105137 / JCM 1170 / LMG 11437 / NCIMB 947 / NCTC 947) (Lactobacillus brevis).